Reading from the N-terminus, the 186-residue chain is Protein C (186 aa).

Over residues 1-15 (MSKTDWNASGLSRPS) the composition is skewed to polar residues. The segment at 1–44 (MSKTDWNASGLSRPSPSAHWPSRKLWQHGQKYQTTQDRSEPPAG) is disordered.

It belongs to the morbillivirus protein C family. As to quaternary structure, interacts with the phosphoprotein (via C-terminus); this interaction allows C to associate with the ribonucleocapsid.

It localises to the host nucleus. The protein resides in the host cytoplasmic vesicle. Ribonucleocapsid-associated protein that interacts with the phosphoprotein (P), thereby increasing replication accuracy and processivity of the polymerase complex. In Homo sapiens (Human), this protein is Protein C (P/V/C).